Here is a 514-residue protein sequence, read N- to C-terminus: uncharacterized protein (514 aa).

This sequence to E.coli YjjI.

This is an uncharacterized protein from Haemophilus influenzae (strain ATCC 51907 / DSM 11121 / KW20 / Rd).